Consider the following 333-residue polypeptide: Putative F-box protein At4g11580 (333 aa).

The 48-residue stretch at 11 to 58 folds into the F-box domain; it reads VSEWADLNKDILELIFNKLDVMDITMGASRVCISWFLASHNKTLWNTV.

This is Putative F-box protein At4g11580 from Arabidopsis thaliana (Mouse-ear cress).